The following is a 380-amino-acid chain: Homoserine O-succinyltransferase (380 aa).

Residues 51–362 (NAVLICHALS…SKHGHDAFLL (312 aa)) enclose the AB hydrolase-1 domain. Ser157 functions as the Nucleophile in the catalytic mechanism. Arg227 lines the substrate pocket. Active-site residues include Asp324 and His357. Asp358 provides a ligand contact to substrate.

This sequence belongs to the AB hydrolase superfamily. MetX family. In terms of assembly, homodimer.

It is found in the cytoplasm. It catalyses the reaction L-homoserine + succinyl-CoA = O-succinyl-L-homoserine + CoA. The protein operates within amino-acid biosynthesis; L-methionine biosynthesis via de novo pathway; O-succinyl-L-homoserine from L-homoserine: step 1/1. Its function is as follows. Transfers a succinyl group from succinyl-CoA to L-homoserine, forming succinyl-L-homoserine. The protein is Homoserine O-succinyltransferase of Cellvibrio japonicus (strain Ueda107) (Pseudomonas fluorescens subsp. cellulosa).